A 1337-amino-acid chain; its full sequence is Zinc finger protein 335 (1337 aa).

Disordered stretches follow at residues 1–108 and 198–226; these read MEEN…LVHS and GPTS…PPAP. Composition is skewed to low complexity over residues 31–45 and 54–63; these read TSEA…AATV and SGVGQSSDGG. A C2H2-type 1 zinc finger spans residues 248–271; that stretch reads FKCKMCQYRSSTKATLLRHMRERH. Residues 278–444 form a disordered region; sequence AAAAATGKRG…PPRRRGRPSR (167 aa). Residues 302–332 show a composition bias toward acidic residues; it reads DRPEEEEEDDDIVDAGAIDDLEEDSDYNPAE. Residues 351-362 show a composition bias toward basic residues; sequence RPRRRPGRPRKL. Positions 363–372 are enriched in basic and acidic residues; the sequence is PRLETSDLHD. Over residues 378 to 388 the composition is skewed to polar residues; sequence LVSSQSTQSPP. 8 consecutive C2H2-type zinc fingers follow at residues 466 to 488, 496 to 518, 524 to 546, 563 to 585, 591 to 613, 622 to 644, 650 to 673, and 679 to 702; these read YLCR…VNSH, FRCL…MFNH, YKCD…AAVH, FPCP…MKTH, HMCD…LLTH, FKCE…QLSH, FKCS…AVKH, and FACE…RCRH. Disordered regions lie at residues 733–767 and 963–999; these read LKQQ…TPPL and QCGG…ASHT. Residues 741–756 show a composition bias toward pro residues; that stretch reads PGPPLSSPGPEAPQEP. Residues S976 and S1007 each carry the phosphoserine modification. 4 C2H2-type zinc fingers span residues 1019-1041, 1047-1069, 1075-1097, and 1103-1126; these read FSCK…KRAH, FKCP…MAQH, HQCN…MLTH, and FSCH…QRLH. A Glycyl lysine isopeptide (Lys-Gly) (interchain with G-Cter in SUMO2) cross-link involves residue K1022. S1149 carries the phosphoserine modification.

It belongs to the krueppel C2H2-type zinc-finger protein family. In terms of assembly, interacts with NCOA6; may enhance ligand-dependent transcriptional activation by nuclear hormone receptors. Interacts with CNOT6. Interacts with CNOT9; the interaction is direct. Component of a nuclear receptor-mediated transcription complex composed of at least ZNF335, CCAR2 and EMSY; the complex stimulates the transcription of nuclear receptor target genes such as SOX9 and HOXA1. Within the complex interacts with EMSY and interacts (via C-terminus) with CCAR2. Interacts with members of histone H3'Lys4'(H3K4) methyltransferase complexes ASH2L, CXXC1, KMT2A/MLL1, RBBP5, SETD1A and WDR5. Component of a histone methylation complex composed of at least ZNF335, RBBP5, ASH2L and WDR5; the complex may have histone H3-specific methyltransferase activity, however does not have specificity for 'Lys-4' of histone H3. Interacts with RBBP5 and WDR5. Interacts with ASHL2. Components of this complex may associate with components of the ZNF335-CCAR2-EMSY nuclear receptor-mediated transcription complex to form a complex at least composed of ZNF335, HCFC1, CCAR2, EMSY, MKI67, RBBP5, ASH2L and WDR5. Within this complex also interacts with HCFC1 and MKI67. As to expression, expressed at low levels in cerebral cortex, hippocampus and cerebellum (at protein level).

Its subcellular location is the nucleus. Component or associated component of some histone methyltransferase complexes may regulate transcription through recruitment of those complexes on gene promoters. Enhances ligand-dependent transcriptional activation by nuclear hormone receptors. Plays an important role in neural progenitor cell proliferation and self-renewal through the regulation of specific genes involved brain development, including REST. Also controls the expression of genes involved in somatic development and regulates, for instance, lymphoblast proliferation. This is Zinc finger protein 335 (Znf335) from Mus musculus (Mouse).